The chain runs to 533 residues: Putative amidase C550.07 (533 aa).

Catalysis depends on charge relay system residues K132 and S207. S231 acts as the Acyl-ester intermediate in catalysis.

Belongs to the amidase family.

The protein localises to the cytoplasm. The protein resides in the nucleus. The catalysed reaction is a monocarboxylic acid amide + H2O = a monocarboxylate + NH4(+). This chain is Putative amidase C550.07, found in Schizosaccharomyces pombe (strain 972 / ATCC 24843) (Fission yeast).